Consider the following 134-residue polypeptide: Putative oxidoreductase CatD (134 aa).

The next 4 helical transmembrane spans lie at 5 to 25 (FEIGTLLLRVITGIIFFVHGL), 46 to 66 (FMAYVIAAIELIGGVLVFFGL), 70 to 90 (IVGVLFALTLIGAIITVKLKA), and 91 to 111 (PFMGNAEFDYLLLLTSIHLAL).

Belongs to the DoxX family.

It localises to the cell membrane. In terms of biological role, essential for growth and viability in the presence of catechol and probably involved in the detoxification of catechol. The chain is Putative oxidoreductase CatD (catD) from Bacillus subtilis (strain 168).